A 337-amino-acid chain; its full sequence is Ornithine carbamoyltransferase, catabolic (337 aa).

Residues Ser-57–Thr-60, Gln-84, Arg-108, and His-135–Gln-138 each bind carbamoyl phosphate. L-ornithine-binding positions include Asn-167, Asp-231, and Ser-235–Met-236. Carbamoyl phosphate is bound by residues Cys-272–Leu-273 and Arg-317.

This sequence belongs to the aspartate/ornithine carbamoyltransferase superfamily. OTCase family.

It localises to the cytoplasm. It carries out the reaction carbamoyl phosphate + L-ornithine = L-citrulline + phosphate + H(+). It participates in amino-acid degradation; L-arginine degradation via ADI pathway; carbamoyl phosphate from L-arginine: step 2/2. In terms of biological role, reversibly catalyzes the transfer of the carbamoyl group from carbamoyl phosphate (CP) to the N(epsilon) atom of ornithine (ORN) to produce L-citrulline. This is Ornithine carbamoyltransferase, catabolic from Streptococcus suis (strain 89/1591).